Reading from the N-terminus, the 99-residue chain is Plastocyanin (99 aa).

Positions 1–99 (VEILLGGEDG…AGMVGKVTVN (99 aa)) constitute a Plastocyanin-like domain. The Cu cation site is built by His37, Cys84, His87, and Met92.

It belongs to the plastocyanin family. Cu(2+) serves as cofactor.

It is found in the plastid. The protein localises to the chloroplast thylakoid membrane. Participates in electron transfer between P700 and the cytochrome b6-f complex in photosystem I. This is Plastocyanin (PETE) from Sambucus nigra (European elder).